A 1393-amino-acid chain; its full sequence is DNA-directed RNA polymerase subunit beta' (1393 aa).

Zn(2+) is bound by residues Cys70, Cys72, Cys85, and Cys88. Mg(2+) contacts are provided by Asp461, Asp463, and Asp465. Zn(2+) contacts are provided by Cys804, Cys877, Cys884, and Cys887.

The protein belongs to the RNA polymerase beta' chain family. The RNAP catalytic core consists of 2 alpha, 1 beta, 1 beta' and 1 omega subunit. When a sigma factor is associated with the core the holoenzyme is formed, which can initiate transcription. The cofactor is Mg(2+). Zn(2+) serves as cofactor.

The catalysed reaction is RNA(n) + a ribonucleoside 5'-triphosphate = RNA(n+1) + diphosphate. Functionally, DNA-dependent RNA polymerase catalyzes the transcription of DNA into RNA using the four ribonucleoside triphosphates as substrates. The protein is DNA-directed RNA polymerase subunit beta' of Rhodospirillum rubrum (strain ATCC 11170 / ATH 1.1.1 / DSM 467 / LMG 4362 / NCIMB 8255 / S1).